A 102-amino-acid polypeptide reads, in one-letter code: Large ribosomal subunit protein bL21 (102 aa).

This sequence belongs to the bacterial ribosomal protein bL21 family. As to quaternary structure, part of the 50S ribosomal subunit. Contacts protein L20.

In terms of biological role, this protein binds to 23S rRNA in the presence of protein L20. This chain is Large ribosomal subunit protein bL21, found in Geobacter sulfurreducens (strain ATCC 51573 / DSM 12127 / PCA).